The chain runs to 448 residues: DNA repair protein RadA (448 aa).

The C4-type zinc-finger motif lies at Cys10 to Cys27. Residue Gly91–Ser98 coordinates ATP. Residues Lys250–Gly254 carry the RadA KNRFG motif motif. A lon-protease-like region spans residues Glu349–Ser448.

Belongs to the RecA family. RadA subfamily.

Functionally, DNA-dependent ATPase involved in processing of recombination intermediates, plays a role in repairing DNA breaks. Stimulates the branch migration of RecA-mediated strand transfer reactions, allowing the 3' invading strand to extend heteroduplex DNA faster. Binds ssDNA in the presence of ADP but not other nucleotides, has ATPase activity that is stimulated by ssDNA and various branched DNA structures, but inhibited by SSB. Does not have RecA's homology-searching function. In Rickettsia bellii (strain RML369-C), this protein is DNA repair protein RadA.